The primary structure comprises 508 residues: MDQFQRNGNKHRSWQQFFLYPLFFREDLYAIAHDHHLDRSSSSEPTEILVSNFFSFLTVKRSIRRIRKQKNSISLFGNCSPNKFLGCNKNFYSKLILEGLTVVLEVSFAMRSKHFIEGMDGWNSIQSIHCIFPLMEDKLPHSNYISDIRVPYSIHPEILVRIFRRWIRDAPSLHLLRSILHEWKNSFSRENLQKALVTQRENTRFSLFLWNSYVYEFESFLVPFVKRFSHSQSLLYGSFPDRTHFDKKIKHIVIFPRKISTKRIWLLKDPFMHYVRYGERSLIALKGTHLQVKKCRYHLFHFWQCYFHLWFQPYRVCSLELSKTYSSFLGYFLHVKMKPLVVRAKMLDDLFITDLITIELNPIAPIRSILFFLAKEKFCDISGRPISKLSWTSLSDDDILDRFDRIWINLFYYYSGSINQDGLYHIKYILLLSCAKTLACKHKSTIRVVREELGSELFTKSFSKEREFISSSFSKTRSQRERIWNSDISQINPLANFWQKIQNKQIEN.

This sequence belongs to the intron maturase 2 family. MatK subfamily.

It is found in the plastid. It localises to the chloroplast. Its function is as follows. Usually encoded in the trnK tRNA gene intron. Probably assists in splicing its own and other chloroplast group II introns. This Cunninghamia lanceolata (China fir) protein is Maturase K.